The chain runs to 541 residues: Glutamyl-tRNA(Gln) amidotransferase subunit B, mitochondrial (541 aa).

The protein belongs to the GatB/GatE family. GatB subfamily. Subunit of the heterotrimeric GatFAB amidotransferase (AdT) complex, composed of A, B and F subunits.

The protein resides in the mitochondrion. The enzyme catalyses L-glutamyl-tRNA(Gln) + L-glutamine + ATP + H2O = L-glutaminyl-tRNA(Gln) + L-glutamate + ADP + phosphate + H(+). Allows the formation of correctly charged Gln-tRNA(Gln) through the transamidation of misacylated Glu-tRNA(Gln) in the mitochondria. The reaction takes place in the presence of glutamine and ATP through an activated gamma-phospho-Glu-tRNA(Gln). The polypeptide is Glutamyl-tRNA(Gln) amidotransferase subunit B, mitochondrial (Saccharomyces cerevisiae (strain YJM789) (Baker's yeast)).